The sequence spans 154 residues: Avirulence protein ATR13 (154 aa).

An N-terminal signal peptide occupies residues 1–19; it reads MRLVHAVLLPGIIVFVSNG. The RxLR motif lies at 38–41; it reads RQLR. The interval 50–92 is leucine heptad repeat region; the sequence is LSRASFGLGKAQDPLDKFFSKIIFSGKPIETSYSAKGIHEKII. Residues 93–103 form a single repeat region region; sequence EAHDLHVSKSK. Positions 104 to 154 are highly variable C-terminus domain; the sequence is NAPIQYASVMEYLKKTYPGPDIERIVSTLERHDEVGAKDLGAKLRDALDRQ.

This sequence belongs to the RxLR effector family.

Its subcellular location is the secreted. It localises to the host cytoplasm. In terms of biological role, secreted effector that acts as an elicitor of hypersensitive response (HR) specifically on plants carrying defense protein RPP13. Recognition of ATR13 by RPP13 initiates defense responses that are effective against oomycete, bacterial and viral pathogens. The allele ATR13-Emco5 recognizes RPP13-Nd, the RPP13 defense protein from Arabidopsis thaliana ecotype Niederzenz. The protein is Avirulence protein ATR13 of Hyaloperonospora arabidopsidis (Peronospora arabidopsidis).